Consider the following 495-residue polypeptide: Glutamyl-tRNA(Gln) amidotransferase subunit A (495 aa).

Catalysis depends on charge relay system residues Lys79 and Ser159. Ser183 (acyl-ester intermediate) is an active-site residue.

Belongs to the amidase family. GatA subfamily. Heterotrimer of A, B and C subunits.

It catalyses the reaction L-glutamyl-tRNA(Gln) + L-glutamine + ATP + H2O = L-glutaminyl-tRNA(Gln) + L-glutamate + ADP + phosphate + H(+). Its function is as follows. Allows the formation of correctly charged Gln-tRNA(Gln) through the transamidation of misacylated Glu-tRNA(Gln) in organisms which lack glutaminyl-tRNA synthetase. The reaction takes place in the presence of glutamine and ATP through an activated gamma-phospho-Glu-tRNA(Gln). The chain is Glutamyl-tRNA(Gln) amidotransferase subunit A from Gluconobacter oxydans (strain 621H) (Gluconobacter suboxydans).